The chain runs to 208 residues: Probable GTP-binding protein EngB (208 aa).

The EngB-type G domain occupies 23 to 205 (LTSEMVILGR…RQTLLKYLLT (183 aa)). Residues 31 to 38 (GRSNVGKS), 57 to 61 (GKTRL), 84 to 87 (DLPG), 154 to 157 (TKFD), and 182 to 184 (FNA) contribute to the GTP site. Positions 38 and 59 each coordinate Mg(2+).

This sequence belongs to the TRAFAC class TrmE-Era-EngA-EngB-Septin-like GTPase superfamily. EngB GTPase family. Mg(2+) is required as a cofactor.

Its function is as follows. Necessary for normal cell division and for the maintenance of normal septation. This is Probable GTP-binding protein EngB from Helicobacter pylori (strain G27).